Consider the following 713-residue polypeptide: Serine/threonine-protein kinase SSN3 (713 aa).

Residues 66 to 484 form the Protein kinase domain; it reads YTILGFLSSG…ANQALEHAWF (419 aa). An ATP-binding site is contributed by 72 to 80; the sequence is LSSGTYGRV. Residues 104 to 120 are compositionally biased toward low complexity; sequence NAGTGSGTATVGSGAST. Positions 104–188 are disordered; that stretch reads NAGTGSGTAT…GGSDNTLQLS (85 aa). A compositionally biased stretch (polar residues) spans 129-142; sequence QQHQLLDSPSSSLH. The segment covering 158–175 has biased composition (low complexity); that stretch reads GTPSASPSLSASLGTSTA. ATP is bound at residue K201. Catalysis depends on D304, which acts as the Proton acceptor. Residues 657 to 672 show a composition bias toward polar residues; that stretch reads SNPATVRSSHSIGSTE. A disordered region spans residues 657–713; it reads SNPATVRSSHSIGSTESITPTTSSQPIPAQPSSAPLARTTNLVATATRNQQRKRQRN. The segment covering 673–691 has biased composition (low complexity); it reads SITPTTSSQPIPAQPSSAP. Positions 694-705 are enriched in polar residues; sequence RTTNLVATATRN.

The protein belongs to the protein kinase superfamily. CMGC Ser/Thr protein kinase family. CDC2/CDKX subfamily. As to quaternary structure, component of the srb8-11 complex, a regulatory module of the Mediator complex. The cofactor is Mg(2+).

The protein resides in the nucleus. The enzyme catalyses L-seryl-[protein] + ATP = O-phospho-L-seryl-[protein] + ADP + H(+). It catalyses the reaction L-threonyl-[protein] + ATP = O-phospho-L-threonyl-[protein] + ADP + H(+). It carries out the reaction [DNA-directed RNA polymerase] + ATP = phospho-[DNA-directed RNA polymerase] + ADP + H(+). Component of the srb8-11 complex. The srb8-11 complex is a regulatory module of the Mediator complex which is itself dependent transcription. The srb8-11 complex may be involved in the transcriptional repression of a subset of genes regulated by Mediator. It may inhibit the association of the Mediator complex with RNA polymerase II to form the holoenzyme complex. The srb8-11 complex phosphorylates the C-terminal domain (CTD) of the largest subunit of RNA polymerase II. The sequence is that of Serine/threonine-protein kinase SSN3 (SSN3) from Mycosarcoma maydis (Corn smut fungus).